The chain runs to 129 residues: Follitropin subunit beta (129 aa).

The signal sequence occupies residues 1–20; it reads MKTLQFFFLFCCWKAICCNS. 6 cysteine pairs are disulfide-bonded: cysteine 21–cysteine 69, cysteine 35–cysteine 84, cysteine 38–cysteine 122, cysteine 46–cysteine 100, cysteine 50–cysteine 102, and cysteine 105–cysteine 112. N-linked (GlcNAc...) asparagine glycosylation is found at asparagine 25 and asparagine 42.

It belongs to the glycoprotein hormones subunit beta family. In terms of assembly, heterodimer. The active follitropin is a heterodimer composed of an alpha chain/CGA shared with other hormones and a unique beta chain/FSHB shown here.

The protein resides in the secreted. Together with the alpha chain CGA constitutes follitropin, the follicle-stimulating hormone, and provides its biological specificity to the hormone heterodimer. Binds FSHR, a G protein-coupled receptor, on target cells to activate downstream signaling pathways. Follitropin is involved in follicle development and spermatogenesis in reproductive organs. The chain is Follitropin subunit beta (FSHB) from Pan troglodytes (Chimpanzee).